We begin with the raw amino-acid sequence, 803 residues long: Translation initiation factor IF-2 (803 aa).

2 disordered regions span residues proline 95–glutamate 125 and glutamate 138–glutamate 178. Residues valine 111–asparagine 121 are compositionally biased toward polar residues. A compositionally biased stretch (basic and acidic residues) spans glutamate 138–lysine 155. Basic residues predominate over residues lysine 156 to lysine 167. Positions proline 168–glutamate 178 are enriched in basic and acidic residues. The tr-type G domain maps to proline 302 to lysine 471. The tract at residues glycine 311–threonine 318 is G1. GTP is bound at residue glycine 311 to threonine 318. The interval glycine 336–histidine 340 is G2. The segment at aspartate 357 to glycine 360 is G3. Residues aspartate 357 to histidine 361 and asparagine 411 to aspartate 414 each bind GTP. Residues asparagine 411–aspartate 414 are G4. Residues serine 447–lysine 449 form a G5 region.

Belongs to the TRAFAC class translation factor GTPase superfamily. Classic translation factor GTPase family. IF-2 subfamily.

Its subcellular location is the cytoplasm. Its function is as follows. One of the essential components for the initiation of protein synthesis. Protects formylmethionyl-tRNA from spontaneous hydrolysis and promotes its binding to the 30S ribosomal subunits. Also involved in the hydrolysis of GTP during the formation of the 70S ribosomal complex. This chain is Translation initiation factor IF-2, found in Coxiella burnetii (strain CbuK_Q154) (Coxiella burnetii (strain Q154)).